We begin with the raw amino-acid sequence, 479 residues long: Cyclic AMP-responsive element-binding protein 3-like protein 3 (479 aa).

The Cytoplasmic portion of the chain corresponds to 1-317 (MDGDIAAGKM…QSTSKPAHAG (317 aa)). The disordered stretch occupies residues 67–144 (CILGPGDSDP…CPEPPRTQVQ (78 aa)). The segment covering 98–110 (PQDTPPRSGTEPA) has biased composition (polar residues). A bZIP domain is found at 239 to 302 (VLKKIRRKIR…LSLLEQLKHL (64 aa)). The tract at residues 241–270 (KKIRRKIRNKQSAQESRKKKKEYIDGLENR) is basic motif. A leucine-zipper region spans residues 281 to 302 (LQRKVLHLEKQNLSLLEQLKHL). K290 participates in a covalent cross-link: Glycyl lysine isopeptide (Lys-Gly) (interchain with G-Cter in ubiquitin). Residues 318–338 (TCIAVLLLSFALIILPSISPF) form a helical; Signal-anchor for type II membrane protein membrane-spanning segment. Residues 339-479 (NSNKVDSPGD…RLVQDALGVL (141 aa)) are Lumenal-facing. N-linked (GlcNAc...) asparagine glycosylation is found at N411, N418, and N425.

The protein belongs to the bZIP family. ATF subfamily. Binds DNA as a dimer. May form homodimers. Interacts with ATF6. Interacts with SYNV1/HRD1; this interaction leads to CREB3L3 ubiquitination and proteasomal degradation. Following ER stress a fragment containing the cytoplasmic transcription factor domain is released by proteolysis. The cleavage seems to be performed sequentially by site-1 and site-2 proteases. Post-translationally, N-glycosylation is required for optimal proteolytic activation. In terms of processing, ubiquitinated at Lys-290 by SYNV1/HRD1 via 'Lys-27'-linked ubiquitin. Expressed in adult liver (at protein level) and small intestine.

It localises to the endoplasmic reticulum membrane. Its subcellular location is the nucleus. Transcription factor that may act during endoplasmic reticulum (ER) stress by activating unfolded protein response target genes. Activated in response to cAMP stimulation. Binds to the cAMP response element (CRE). Activates transcription through box-B element. Activates transcription through CRE. May function synergistically with ATF6. In acute inflammatory response, may activate expression of acute phase response (APR) genes. May be involved in growth suppression. Regulates FGF21 transcription. Plays a crucial role in the regulation of triglyceride metabolism and is required for the maintenance of normal plasma triglyceride concentrations. This is Cyclic AMP-responsive element-binding protein 3-like protein 3 (Creb3l3) from Mus musculus (Mouse).